The chain runs to 491 residues: Trigger factor (491 aa).

One can recognise a PPIase FKBP-type domain in the interval 173-260 (GDVAVVSFSG…LDELKGRELP (88 aa)). The disordered stretch occupies residues 435 to 491 (MVDPASEDKPAKASKAKSSKAKAEKEPAAEGQAKAKPAAKTSKSKTKAAEKLITPID). The span at 463 to 475 (AEGQAKAKPAAKT) shows a compositional bias: low complexity.

The protein belongs to the FKBP-type PPIase family. Tig subfamily.

It localises to the cytoplasm. The enzyme catalyses [protein]-peptidylproline (omega=180) = [protein]-peptidylproline (omega=0). In terms of biological role, involved in protein export. Acts as a chaperone by maintaining the newly synthesized protein in an open conformation. Functions as a peptidyl-prolyl cis-trans isomerase. This Synechococcus sp. (strain RCC307) protein is Trigger factor.